We begin with the raw amino-acid sequence, 911 residues long: Translation initiation factor IF-2 (911 aa).

Basic and acidic residues-rich tracts occupy residues 80 to 94 (LEEQ…EQQL) and 101 to 113 (RPER…RTEV). 3 disordered regions span residues 80–142 (LEEQ…VSEP), 153–172 (VKSP…DVEG), and 195–309 (SSLG…KMRK). Basic and acidic residues predominate over residues 214 to 256 (KEQADELKDEFDIKAKEGGKEREAGGESRKPVKKGSEETKKTT). Residues 262 to 272 (AKKKKGKKKKK) show a composition bias toward basic residues. The segment covering 273–284 (PEVDEKTIEKNI) has biased composition (basic and acidic residues). Over residues 286-300 (STISGMDDTSGSGSS) the composition is skewed to low complexity. Residues 408–578 (IRPPVVTIMG…LTEAEIRELK (171 aa)) form the tr-type G domain. Residues 417-424 (GHVDHGKT) are G1. 417–424 (GHVDHGKT) contributes to the GTP binding site. The interval 442–446 (GITQH) is G2. Positions 464–467 (DTPG) are G3. Residues 464-468 (DTPGH) and 518-521 (NKID) contribute to the GTP site. Positions 518-521 (NKID) are G4. Residues 554–556 (SAK) are G5.

It belongs to the TRAFAC class translation factor GTPase superfamily. Classic translation factor GTPase family. IF-2 subfamily.

The protein resides in the cytoplasm. One of the essential components for the initiation of protein synthesis. Protects formylmethionyl-tRNA from spontaneous hydrolysis and promotes its binding to the 30S ribosomal subunits. Also involved in the hydrolysis of GTP during the formation of the 70S ribosomal complex. This Chlorobium phaeobacteroides (strain BS1) protein is Translation initiation factor IF-2.